Consider the following 60-residue polypeptide: Cytochrome c oxidase assembly protein COX14 homolog (60 aa).

Residues 10 to 32 traverse the membrane as a helical segment; that stretch reads VGYRLFSGSMMLLTVYGGYLCVV.

The protein resides in the mitochondrion membrane. Functionally, plays a role in the assembly or stability of the cytochrome c oxidase complex (COX). In Danio rerio (Zebrafish), this protein is Cytochrome c oxidase assembly protein COX14 homolog.